The following is a 508-amino-acid chain: Histidine--tRNA ligase, cytoplasmic (508 aa).

The WHEP-TRS domain maps to 3 to 59 (SPALEELVLNSRHRLVRGLKQQKASADQIEEEVAKLLKLKAQLGHDESKQKFVLKTP). S66 is modified (phosphoserine). L-histidine is bound by residues 130–132 (DLT), R157, D177, R326, and 330–331 (YY).

It belongs to the class-II aminoacyl-tRNA synthetase family. As to quaternary structure, homodimer.

It is found in the cytoplasm. The catalysed reaction is tRNA(His) + L-histidine + ATP = L-histidyl-tRNA(His) + AMP + diphosphate + H(+). Its function is as follows. Catalyzes the ATP-dependent ligation of histidine to the 3'-end of its cognate tRNA, via the formation of an aminoacyl-adenylate intermediate (His-AMP). Plays a role in axon guidance. This is Histidine--tRNA ligase, cytoplasmic (HARS1) from Mesocricetus auratus (Golden hamster).